We begin with the raw amino-acid sequence, 837 residues long: Intestinal mucin-like protein (837 aa).

Repeat copies occupy residues 17-27, 28-38, 39-50, and 51-62. The 5 X 11 AA approximate tandem repeats stretch occupies residues 17-70; that stretch reads PSTPSTPPPSTPTTPTSSQTTTPSTPSTTSSKSTPSTPQSTSSKSTPSTPPKTT. Residues 17 to 75 are disordered; it reads PSTPSTPPPSTPTTPTSSQTTTPSTPSTTSSKSTPSTPQSTSSKSTPSTPPKTTLPGCL. Residues 29-70 are compositionally biased toward low complexity; it reads TTPTSSQTTTPSTPSTTSSKSTPSTPQSTSSKSTPSTPPKTT. A 5; truncated repeat occupies 63–70; that stretch reads PSTPPKTT. N-linked (GlcNAc...) asparagine glycosylation is found at N91 and N164. Residues 141–324 form the VWFD domain; that stretch reads CYCTGWGDPH…VNDPSKPHCP (184 aa). Disulfide bonds link C143–C284, C165–C323, and C189–C197. Residues 149-837 form a probably important for disulfide-bond mediated mucin polymerization (link domain) region; it reads PHFVTFDGLY…RSSPRLLGRK (689 aa). N-linked (GlcNAc...) asparagine glycans are attached at residues N278, N289, N344, N410, N444, N515, N538, N612, N627, N695, N727, and N749. 2 consecutive VWFC domains span residues 472-543 and 581-648; these read CGCV…TSCK and GVCV…KKCQ. 4 disulfide bridges follow: C732/C779, C746/C793, C755/C809, and C759/C811. In terms of domain architecture, CTCK spans 732–817; sequence CSAIPVMKEI…SCLCQGTVCE (86 aa).

Multimeric. In terms of tissue distribution, coats the epithelia of the intestines.

Its subcellular location is the secreted. In Rattus norvegicus (Rat), this protein is Intestinal mucin-like protein.